The following is a 67-amino-acid chain: Moricin (67 aa).

The N-terminal stretch at 1–23 (MKLTSLFIFVIVALSLLFSSTDA) is a signal peptide.

The protein belongs to the moricin family. As to quaternary structure, monomer.

The protein resides in the secreted. Its function is as follows. Antimicrobial peptide. Active against a broad spectrum of Gram-positive and Gram-negative bacteria including methicillin-resistant S.aureus ATCC 43 300, S.aureus BAA-39, pathogenic strains of L.monocytogenes, K.pneumoniae, E.coli O157:H7, S.typhimurium and multidrug-resistant S.typhimurium DT104 with minimum inhibitory concentration (MIC) of 1.4 uM for all except for S.aureus BAA-39. Also active against Serratia marcescens. Probably acts by disturbing membrane functions with its amphipathic alpha-helical structure. May protect a developing embryo from bacterial infection. The chain is Moricin from Manduca sexta (Tobacco hawkmoth).